Here is a 141-residue protein sequence, read N- to C-terminus: Nucleoside diphosphate kinase (141 aa).

ATP is bound by residues Lys11, Phe59, Arg87, Thr93, Arg104, and Asn114. The active-site Pros-phosphohistidine intermediate is His117.

The protein belongs to the NDK family. In terms of assembly, homotetramer. The cofactor is Mg(2+).

The protein resides in the cytoplasm. The enzyme catalyses a 2'-deoxyribonucleoside 5'-diphosphate + ATP = a 2'-deoxyribonucleoside 5'-triphosphate + ADP. It carries out the reaction a ribonucleoside 5'-diphosphate + ATP = a ribonucleoside 5'-triphosphate + ADP. Its function is as follows. Major role in the synthesis of nucleoside triphosphates other than ATP. The ATP gamma phosphate is transferred to the NDP beta phosphate via a ping-pong mechanism, using a phosphorylated active-site intermediate. In Xylella fastidiosa (strain M23), this protein is Nucleoside diphosphate kinase.